We begin with the raw amino-acid sequence, 321 residues long: Probable protein phosphatase methylesterase 1 (321 aa).

Active-site residues include Ser-170, Asp-195, and His-307.

Belongs to the AB hydrolase superfamily.

It catalyses the reaction [phosphatase 2A protein]-C-terminal L-leucine methyl ester + H2O = [phosphatase 2A protein]-C-terminal L-leucine + methanol + H(+). Its function is as follows. Demethylates proteins that have been reversibly carboxymethylated. The protein is Probable protein phosphatase methylesterase 1 (ppme1) of Dictyostelium discoideum (Social amoeba).